The chain runs to 143 residues: Large ribosomal subunit protein uL11 (143 aa).

Belongs to the universal ribosomal protein uL11 family. In terms of assembly, part of the ribosomal stalk of the 50S ribosomal subunit. Interacts with L10 and the large rRNA to form the base of the stalk. L10 forms an elongated spine to which L12 dimers bind in a sequential fashion forming a multimeric L10(L12)X complex. In terms of processing, one or more lysine residues are methylated.

Its function is as follows. Forms part of the ribosomal stalk which helps the ribosome interact with GTP-bound translation factors. This Salinispora tropica (strain ATCC BAA-916 / DSM 44818 / JCM 13857 / NBRC 105044 / CNB-440) protein is Large ribosomal subunit protein uL11.